The sequence spans 453 residues: Folate transporter 1 (453 aa).

N-linked (GlcNAc...) asparagine glycosylation occurs at N36. The next 5 helical transmembrane spans lie at 48 to 68, 73 to 93, 102 to 122, 136 to 156, and 161 to 181; these read PYWT…TDIL, IVMI…FGKG, VSFG…YSIV, AAAL…ISTH, and LVLN…AIFL. N260 carries an N-linked (GlcNAc...) asparagine glycan. Helical transmembrane passes span 276-296, 306-326, 331-351, 368-388, and 401-421; these read VANG…SLFI, HGQM…YLCS, VLVA…LITA, IFGC…LVVV, and FVIY…FFMI.

The protein belongs to the reduced folate carrier (RFC) transporter (TC 2.A.48) family. Highly expressed in pharynx and posterior part of the intestine. Expressed at lower levels in the body wall muscles, head muscles, and vulva muscles. Highly expressed in the intestine of the early larva, levels decrease in the later stages of development.

The protein resides in the membrane. In terms of biological role, folate transporter. The polypeptide is Folate transporter 1 (folt-1) (Caenorhabditis elegans).